Reading from the N-terminus, the 241-residue chain is Small ribosomal subunit protein uS3 (241 aa).

Positions 39 to 107 (IRTYLKKELY…PLSVNIKEEK (69 aa)) constitute a KH type-2 domain. The disordered stretch occupies residues 214 to 241 (AEVKEEQQKEGARRPKRAPKRENSGKAE). Residues 215 to 226 (EVKEEQQKEGAR) show a composition bias toward basic and acidic residues.

The protein belongs to the universal ribosomal protein uS3 family. Part of the 30S ribosomal subunit. Forms a tight complex with proteins S10 and S14.

Binds the lower part of the 30S subunit head. Binds mRNA in the 70S ribosome, positioning it for translation. This is Small ribosomal subunit protein uS3 from Sulfurimonas denitrificans (strain ATCC 33889 / DSM 1251) (Thiomicrospira denitrificans (strain ATCC 33889 / DSM 1251)).